Consider the following 1503-residue polypeptide: E3 ubiquitin-protein ligase listerin (1503 aa).

14 HEAT repeats span residues 52-89 (SGIDDETRIVMRKLTKKDCQTREKGLRELTNIIAETSS), 93-129 (CYEHFCGLVPQLSTDGSPTVRLLTMKTITLFLVKLEK), 133-170 (KGLKKIIPMVLFARCDVTNGVAAAAGAVIRDGFEADKK), 280-318 (LNTPSIVTYIQNHLDSQTFTPECSTAWEGMIILLPSAQF), 323-345 (SLQNGIYPRFLNVIRKKGNHWRV), 346-384 (LQHFLLPAVVLLLKEMGSLENNMKVLGTIMESFTDNLPW), 552-589 (GDIVRLIKLLLENQEIKSLNISVKNDHVGRRLLLTGGS), 640-663 (AENVEFLITLLRKMKSTDVSNEAE), 664-700 (KNVLILKLFTAIFESDEDAKSEHYNCLSEHLTSDFNS), 845-882 (LEKRYSLVALTEELQRSRREIEERLIRSDEVRFKLDDS), 1022-1065 (TLFI…RMFR), 1078-1117 (RTLLKAMFTLVEFPTNVPNDSVVTREFVPELSVFKYSLLE), 1141-1183 (AAAK…VMIS), and 1302-1340 (FKSITLLPAAVRLFHKNIPNNFKPIFQEVVTKHASKLLI). Residues 1446–1499 (CTICMMTVHQQTNQLPKVKCKQCKNRFHSNCLVSSFHTYKWFESSNQSTCPLCR) form an RING-type zinc finger.

Belongs to the LTN1 family. As to quaternary structure, component of the ribosome quality control complex (RQC), composed of at least the E3 ubiquitin ligase ltn1 and nemf. The complex probably also contains tcf25 as well as vcp/p97 and its ubiquitin-binding cofactors. RQC forms a stable complex with 60S ribosomal subunits.

The protein resides in the cytoplasm. It is found in the cytosol. It catalyses the reaction S-ubiquitinyl-[E2 ubiquitin-conjugating enzyme]-L-cysteine + [acceptor protein]-L-lysine = [E2 ubiquitin-conjugating enzyme]-L-cysteine + N(6)-ubiquitinyl-[acceptor protein]-L-lysine.. It functions in the pathway protein modification; protein ubiquitination. Functionally, E3 ubiquitin-protein ligase. Component of the ribosome quality control complex (RQC), a ribosome-associated complex that mediates ubiquitination and extraction of incompletely synthesized nascent chains for proteasomal degradation. Ubiquitination leads to vcp/p97 recruitment for extraction and degradation of the incomplete translation product. This Caenorhabditis briggsae protein is E3 ubiquitin-protein ligase listerin.